The following is a 286-amino-acid chain: AB hydrolase superfamily protein YfhM (286 aa).

An AB hydrolase-1 domain is found at 27–272; sequence PLIVLLHGFP…ASHWINHEKP (246 aa). The Nucleophile role is filled by aspartate 103. Tyrosine 210 acts as the Proton donor in catalysis. Histidine 265 serves as the catalytic Proton acceptor.

This sequence belongs to the AB hydrolase superfamily. Epoxide hydrolase family.

This chain is AB hydrolase superfamily protein YfhM (yfhM), found in Bacillus subtilis (strain 168).